A 283-amino-acid polypeptide reads, in one-letter code: Phosphatidylserine decarboxylase proenzyme (283 aa).

Residues Asp-89, His-146, and Ser-249 each act as charge relay system; for autoendoproteolytic cleavage activity in the active site. Catalysis depends on Ser-249, which acts as the Schiff-base intermediate with substrate; via pyruvic acid; for decarboxylase activity. The residue at position 249 (Ser-249) is a Pyruvic acid (Ser); by autocatalysis.

It belongs to the phosphatidylserine decarboxylase family. PSD-B subfamily. Prokaryotic type I sub-subfamily. In terms of assembly, heterodimer of a large membrane-associated beta subunit and a small pyruvoyl-containing alpha subunit. Pyruvate is required as a cofactor. Post-translationally, is synthesized initially as an inactive proenzyme. Formation of the active enzyme involves a self-maturation process in which the active site pyruvoyl group is generated from an internal serine residue via an autocatalytic post-translational modification. Two non-identical subunits are generated from the proenzyme in this reaction, and the pyruvate is formed at the N-terminus of the alpha chain, which is derived from the carboxyl end of the proenzyme. The autoendoproteolytic cleavage occurs by a canonical serine protease mechanism, in which the side chain hydroxyl group of the serine supplies its oxygen atom to form the C-terminus of the beta chain, while the remainder of the serine residue undergoes an oxidative deamination to produce ammonia and the pyruvoyl prosthetic group on the alpha chain. During this reaction, the Ser that is part of the protease active site of the proenzyme becomes the pyruvoyl prosthetic group, which constitutes an essential element of the active site of the mature decarboxylase.

Its subcellular location is the cell membrane. The catalysed reaction is a 1,2-diacyl-sn-glycero-3-phospho-L-serine + H(+) = a 1,2-diacyl-sn-glycero-3-phosphoethanolamine + CO2. It functions in the pathway phospholipid metabolism; phosphatidylethanolamine biosynthesis; phosphatidylethanolamine from CDP-diacylglycerol: step 2/2. Catalyzes the formation of phosphatidylethanolamine (PtdEtn) from phosphatidylserine (PtdSer). The polypeptide is Phosphatidylserine decarboxylase proenzyme (Legionella pneumophila (strain Corby)).